The following is a 266-amino-acid chain: Undecaprenyl-diphosphatase (266 aa).

Transmembrane regions (helical) follow at residues Asn41–Trp61, Tyr82–Asp102, Ala106–Leu126, Ile140–Leu160, Leu180–Gly200, Ile213–Cys233, and Leu245–Leu265.

It belongs to the UppP family.

Its subcellular location is the cell inner membrane. It carries out the reaction di-trans,octa-cis-undecaprenyl diphosphate + H2O = di-trans,octa-cis-undecaprenyl phosphate + phosphate + H(+). Its function is as follows. Catalyzes the dephosphorylation of undecaprenyl diphosphate (UPP). Confers resistance to bacitracin. This is Undecaprenyl-diphosphatase from Bacteroides fragilis (strain ATCC 25285 / DSM 2151 / CCUG 4856 / JCM 11019 / LMG 10263 / NCTC 9343 / Onslow / VPI 2553 / EN-2).